Reading from the N-terminus, the 239-residue chain is Dihydromethanopterin reductase (acceptor) (239 aa).

2 consecutive 4Fe-4S ferredoxin-type domains span residues 144–175 (MPYN…EKNG) and 176–205 (VTDQ…GGPV). The [4Fe-4S] cluster site is built by Cys-153, Cys-156, Cys-159, Cys-165, Cys-185, Cys-188, Cys-191, and Cys-195.

In terms of assembly, homodimer. [4Fe-4S] cluster is required as a cofactor.

The enzyme catalyses 5,6,7,8-tetrahydromethanopterin + A = 7,8-dihydromethanopterin + AH2. Its pathway is cofactor biosynthesis; 5,6,7,8-tetrahydromethanopterin biosynthesis. Involved in the biosynthesis of tetrahydromethanopterin, a coenzyme used in methanogenesis. Catalyzes the reduction of dihydromethanopterin (H(2)MPT) to tetrahydromethanopterin (H(4)MPT). Ferredoxin may serve as an electron donor. The chain is Dihydromethanopterin reductase (acceptor) from Methanosarcina mazei (strain ATCC BAA-159 / DSM 3647 / Goe1 / Go1 / JCM 11833 / OCM 88) (Methanosarcina frisia).